The primary structure comprises 149 residues: MRWTKSSQPRKQRKAFFNAPLHKRQKLMSATLHPELRKKFNRRSLPVRRGDMVRIMRGDFKGHEGEVVEVDLKRLRIYVEGATIERANGEKVYYPIHPSNVMIIEPNLDDPMRRKIIERSGGTPEVEAVPEKSEEEKEEKEKEEEKSEE.

The tract at residues arginine 114–glutamate 149 is disordered. Residues valine 129 to glutamate 149 are compositionally biased toward basic and acidic residues.

It belongs to the universal ribosomal protein uL24 family. In terms of assembly, part of the 50S ribosomal subunit.

One of two assembly initiator proteins, it binds directly to the 5'-end of the 23S rRNA, where it nucleates assembly of the 50S subunit. In terms of biological role, located at the polypeptide exit tunnel on the outside of the subunit. The polypeptide is Large ribosomal subunit protein uL24 (Methanopyrus kandleri (strain AV19 / DSM 6324 / JCM 9639 / NBRC 100938)).